We begin with the raw amino-acid sequence, 950 residues long: RNA polymerase-associated protein RapA (950 aa).

Positions E165–N333 constitute a Helicase ATP-binding domain. Residue D178 to T185 participates in ATP binding. The DEAH box motif lies at D279–H282. Positions R475–H629 constitute a Helicase C-terminal domain.

It belongs to the SNF2/RAD54 helicase family. RapA subfamily. As to quaternary structure, interacts with the RNAP. Has a higher affinity for the core RNAP than for the holoenzyme. Its ATPase activity is stimulated by binding to RNAP.

Transcription regulator that activates transcription by stimulating RNA polymerase (RNAP) recycling in case of stress conditions such as supercoiled DNA or high salt concentrations. Probably acts by releasing the RNAP, when it is trapped or immobilized on tightly supercoiled DNA. Does not activate transcription on linear DNA. Probably not involved in DNA repair. The sequence is that of RNA polymerase-associated protein RapA from Pseudomonas aeruginosa (strain LESB58).